A 440-amino-acid polypeptide reads, in one-letter code: Probable aldose 1-epimerase ARB_05372 (440 aa).

The N-terminal stretch at 1–24 is a signal peptide; the sequence is MCGVLRQLMLLLLAFLSITPSCSA. 5 N-linked (GlcNAc...) asparagine glycosylation sites follow: Asn32, Asn38, Asn43, Asn68, and Asn112. Position 125 to 126 (125 to 126) interacts with substrate; that stretch reads NR. Asn129, Asn147, Asn163, Asn171, and Asn199 each carry an N-linked (GlcNAc...) asparagine glycan. His233 serves as the catalytic Proton donor. Asn243, Asn275, Asn281, and Asn306 each carry an N-linked (GlcNAc...) asparagine glycan. Residue Asp311 participates in substrate binding. Asn321, Asn337, Asn365, and Asn385 each carry an N-linked (GlcNAc...) asparagine glycan. Glu401 functions as the Proton acceptor in the catalytic mechanism.

It belongs to the aldose epimerase family. As to quaternary structure, monomer.

The protein resides in the secreted. The catalysed reaction is alpha-D-glucose = beta-D-glucose. Its pathway is carbohydrate metabolism; hexose metabolism. Its function is as follows. Mutarotase converts alpha-aldose to the beta-anomer. It is active on D-glucose, L-arabinose, D-xylose, D-galactose, maltose and lactose. This chain is Probable aldose 1-epimerase ARB_05372, found in Arthroderma benhamiae (strain ATCC MYA-4681 / CBS 112371) (Trichophyton mentagrophytes).